Here is a 593-residue protein sequence, read N- to C-terminus: Aspartate--tRNA ligase (593 aa).

Residue Glu173 coordinates L-aspartate. The segment at 197-200 is aspartate; that stretch reads QLFK. Arg219 contacts L-aspartate. ATP contacts are provided by residues 219 to 221 and Gln228; that span reads RDE. Residue His448 participates in L-aspartate binding. Glu482 is an ATP binding site. Position 489 (Arg489) interacts with L-aspartate. 534 to 537 provides a ligand contact to ATP; that stretch reads GLDR.

This sequence belongs to the class-II aminoacyl-tRNA synthetase family. Type 1 subfamily. In terms of assembly, homodimer.

The protein resides in the cytoplasm. It carries out the reaction tRNA(Asp) + L-aspartate + ATP = L-aspartyl-tRNA(Asp) + AMP + diphosphate. Its function is as follows. Catalyzes the attachment of L-aspartate to tRNA(Asp) in a two-step reaction: L-aspartate is first activated by ATP to form Asp-AMP and then transferred to the acceptor end of tRNA(Asp). The sequence is that of Aspartate--tRNA ligase from Shewanella denitrificans (strain OS217 / ATCC BAA-1090 / DSM 15013).